A 725-amino-acid polypeptide reads, in one-letter code: Kelch domain-containing protein SSO1033 (725 aa).

Residues 1–28 (MKYGNMKKWAPLILFLFSLLLLQGISLH) form the signal peptide. 6 Kelch repeats span residues 59 to 100 (SLYI…VYNN), 101 to 145 (TIYV…VYNN), 146 to 199 (AIYV…FNGT), 201 to 248 (LIIV…YYRG), 250 to 297 (LFIV…QVGN), and 299 to 342 (LYLA…VTLG). Fibronectin type-III domains are found at residues 323–410 (PPLP…TPAS), 411–504 (VPNP…TKAS), 505–583 (VFAF…VVYY), and 585–665 (PPAS…TGDY).

The protein is Kelch domain-containing protein SSO1033 of Saccharolobus solfataricus (strain ATCC 35092 / DSM 1617 / JCM 11322 / P2) (Sulfolobus solfataricus).